We begin with the raw amino-acid sequence, 565 residues long: MEPKTKKQRSLYIPYAGPVLLEFPLLNKGSAFSMEERRNFNLLGLLPEVVETIEEQAERAWIQYQGFKTEIDKHIYLRNIQDTNETLFYRLVNNHLDEMMPVIYTPTVGAACERFSEIYRRSRGVFISYQNRHNMDDILQNVPNHNIKVIVVTDGERILGLGDQGIGGMGIPIGKLSLYTACGGISPAYTLPVVLDVGTNNQQLLNDPLYMGWRNPRIIDDEYYEFVDEFIQAVKQRWPDVLLQFEDFAQKNAMPLLNRYRNEICSFNDDIQGTAAVTVGTLIAASRAAGGQLSEKKIVFLGAGSAGCGIAEMIIAQTQREGLSEEAARQKVFMVDRFGLLTDKMPNLLPFQTKLVQKRENLSDWDTDSDVLSLLDVVRNVKPDILIGVSGQTGLFTEEIIREMHKHCPRPIVMPLSNPTSRVEATPQDIIAWTEGNALVATGSPFNPVVWKDKIYPIAQCNNAFIFPGIGLGVIASGASRITDEMLMSASETLAQYSPLVLNGEGLVLPELKDIQKVSRAIAFAVGKMAQQQGVAVKTSAEALQQAIDDNFWQAEYRDYRRTSI.

Residue Tyr-104 is the Proton donor of the active site. Arg-157 contributes to the NAD(+) binding site. The Proton acceptor role is filled by Lys-175. A divalent metal cation contacts are provided by Glu-246, Asp-247, and Asp-270. 2 residues coordinate NAD(+): Asp-270 and Asn-418.

Belongs to the malic enzymes family. As to quaternary structure, homotetramer. The cofactor is Mg(2+). Requires Mn(2+) as cofactor.

It catalyses the reaction (S)-malate + NAD(+) = pyruvate + CO2 + NADH. The catalysed reaction is oxaloacetate + H(+) = pyruvate + CO2. In Shigella boydii serotype 18 (strain CDC 3083-94 / BS512), this protein is NAD-dependent malic enzyme.